A 201-amino-acid polypeptide reads, in one-letter code: Small ribosomal subunit protein uS4c (201 aa).

The segment at 15-43 (LGALPGLTSKRPRSGSDLRNQSRSGKRSQ) is disordered. An S4 RNA-binding domain is found at 89 to 150 (MRLDNILFRL…KERSRALIQN (62 aa)).

It belongs to the universal ribosomal protein uS4 family. In terms of assembly, part of the 30S ribosomal subunit. Contacts protein S5. The interaction surface between S4 and S5 is involved in control of translational fidelity.

The protein resides in the plastid. It is found in the chloroplast. In terms of biological role, one of the primary rRNA binding proteins, it binds directly to 16S rRNA where it nucleates assembly of the body of the 30S subunit. Its function is as follows. With S5 and S12 plays an important role in translational accuracy. The chain is Small ribosomal subunit protein uS4c (rps4) from Amborella trichopoda.